The following is an 86-amino-acid chain: MAEENKTNRDDLTFEEAMKGLEQIVSKLEEGDVPLEKAIDYFQEGMALSKICHEKLQNVEKQMDFILRENGELAPFSVREEEKGDR.

The protein belongs to the XseB family. As to quaternary structure, heterooligomer composed of large and small subunits.

The protein resides in the cytoplasm. It carries out the reaction Exonucleolytic cleavage in either 5'- to 3'- or 3'- to 5'-direction to yield nucleoside 5'-phosphates.. Its function is as follows. Bidirectionally degrades single-stranded DNA into large acid-insoluble oligonucleotides, which are then degraded further into small acid-soluble oligonucleotides. The chain is Exodeoxyribonuclease 7 small subunit from Bacillus licheniformis (strain ATCC 14580 / DSM 13 / JCM 2505 / CCUG 7422 / NBRC 12200 / NCIMB 9375 / NCTC 10341 / NRRL NRS-1264 / Gibson 46).